A 235-amino-acid polypeptide reads, in one-letter code: 2-C-methyl-D-erythritol 4-phosphate cytidylyltransferase (235 aa).

This sequence belongs to the IspD/TarI cytidylyltransferase family. IspD subfamily.

The enzyme catalyses 2-C-methyl-D-erythritol 4-phosphate + CTP + H(+) = 4-CDP-2-C-methyl-D-erythritol + diphosphate. The protein operates within isoprenoid biosynthesis; isopentenyl diphosphate biosynthesis via DXP pathway; isopentenyl diphosphate from 1-deoxy-D-xylulose 5-phosphate: step 2/6. In terms of biological role, catalyzes the formation of 4-diphosphocytidyl-2-C-methyl-D-erythritol from CTP and 2-C-methyl-D-erythritol 4-phosphate (MEP). The chain is 2-C-methyl-D-erythritol 4-phosphate cytidylyltransferase from Pseudomonas fluorescens (strain Pf0-1).